Consider the following 864-residue polypeptide: Microtubule-associated protein TORTIFOLIA1 (864 aa).

Residues 1 to 26 (MSTPTTSGSAAKPTRPARSSSLATRS) are disordered. A compositionally biased stretch (polar residues) spans 17 to 26 (ARSSSLATRS). HEAT repeat units lie at residues 76-113 (ETLP…LHCD), 117-154 (AHLT…IYLK), 167-204 (LAVG…SAAS), 208-245 (TSFQ…VGAI), and 248-285 (QSLE…HSSG). Positions 329–353 (DGASDDSKLSASEQLGSEKNGEKRS) are disordered. Serine 414 is subject to Phosphoserine. The disordered stretch occupies residues 426–504 (NDEEESGLDD…QSEGSFTSNR (79 aa)). Residues 439-448 (MGSSNRLKNT) show a composition bias toward polar residues. Residues 449–459 (QADDKQVKGRF) are compositionally biased toward basic and acidic residues. Polar residues predominate over residues 489–504 (VSNTDNQSEGSFTSNR). Residues 508–561 (SAIQRQLLQLERQQTNLMNMLQEFIGGSHDSMVTLEGRVRGLERIVEDMARDLS) adopt a coiled-coil conformation. A disordered region spans residues 615-670 (DDWFIPPHAASRNGQAGPRRSPRSEQYENEHMGNGRRGWDNKASGTIRFGEGPSAR). Residues 636 to 654 (PRSEQYENEHMGNGRRGWD) are compositionally biased toward basic and acidic residues.

As to quaternary structure, interacts with WAV3. Expressed in roots, hypocotyls, stems, flowers, siliques, inflorescences, petioles, cotyledons, and leaves. Particularly present in root tips and shoot meristems.

The protein resides in the cytoplasm. Its subcellular location is the cytoskeleton. Plant-specific microtubule-associated protein (MAP) that regulates the orientation of cortical microtubules and the direction of organ growth. Determines microtubule organization by modulating microtubule severing. The protein is Microtubule-associated protein TORTIFOLIA1 of Arabidopsis thaliana (Mouse-ear cress).